A 75-amino-acid polypeptide reads, in one-letter code: MSQQQGYYQQGPPQQGYYQQGPPQQGYYQQGPPQQGYPQQQPVYVQQGQPKEESCLDSCLKCLCCCFLLELVCDN.

A disordered region spans residues 1–43 (MSQQQGYYQQGPPQQGYYQQGPPQQGYYQQGPPQQGYPQQQPV). 3 consecutive repeat copies span residues 4–13 (QQGYYQQGPP), 14–23 (QQGYYQQGPP), and 24–33 (QQGYYQQGPP). A 3 X 10 AA tandem repeats of Q-Q-G-Y-Y-Q-Q-G-P-P region spans residues 4-33 (QQGYYQQGPPQQGYYQQGPPQQGYYQQGPP).

Belongs to the CYSTM1 family. Palmitoylated near the C-terminus.

The protein resides in the cell membrane. The chain is Lipid-anchored plasma membrane protein CPP2 from Saccharomyces cerevisiae (strain ATCC 204508 / S288c) (Baker's yeast).